The primary structure comprises 271 residues: Formamidopyrimidine-DNA glycosylase (271 aa).

P2 (schiff-base intermediate with DNA) is an active-site residue. The active-site Proton donor is the E3. K57 serves as the catalytic Proton donor; for beta-elimination activity. 3 residues coordinate DNA: H90, R109, and K151. The FPG-type zinc-finger motif lies at 236–270; the sequence is HVYGRGGETCTQCGNLLSEIRLGQRTTVFCGICQT. The active-site Proton donor; for delta-elimination activity is R260.

This sequence belongs to the FPG family. Monomer. Zn(2+) is required as a cofactor.

The enzyme catalyses Hydrolysis of DNA containing ring-opened 7-methylguanine residues, releasing 2,6-diamino-4-hydroxy-5-(N-methyl)formamidopyrimidine.. The catalysed reaction is 2'-deoxyribonucleotide-(2'-deoxyribose 5'-phosphate)-2'-deoxyribonucleotide-DNA = a 3'-end 2'-deoxyribonucleotide-(2,3-dehydro-2,3-deoxyribose 5'-phosphate)-DNA + a 5'-end 5'-phospho-2'-deoxyribonucleoside-DNA + H(+). In terms of biological role, involved in base excision repair of DNA damaged by oxidation or by mutagenic agents. Acts as a DNA glycosylase that recognizes and removes damaged bases. Has a preference for oxidized purines, such as 7,8-dihydro-8-oxoguanine (8-oxoG). Has AP (apurinic/apyrimidinic) lyase activity and introduces nicks in the DNA strand. Cleaves the DNA backbone by beta-delta elimination to generate a single-strand break at the site of the removed base with both 3'- and 5'-phosphates. This chain is Formamidopyrimidine-DNA glycosylase, found in Shewanella sp. (strain MR-7).